Here is a 528-residue protein sequence, read N- to C-terminus: PC4 and SFRS1-interacting protein (528 aa).

The 58-residue stretch at 7-64 (PGDLIFAKMKGYPHWPARVDEVPDGAVKPPTNKLPIFFFGTHETAFLGPKDIFPYSEN) folds into the PWWP domain. Residue lysine 75 forms a Glycyl lysine isopeptide (Lys-Gly) (interchain with G-Cter in SUMO2) linkage. The interval 86–347 (NNPKVKFSSQ…VEKKRETSMD (262 aa)) is disordered. Polar residues predominate over residues 92–106 (FSSQQVSTKQSNASS). Phosphoserine occurs at positions 102, 105, and 106. Residues 113 to 135 (KETSVSKEDTDQEEKASNEDVTK) are compositionally biased toward basic and acidic residues. Residues threonine 115 and threonine 122 each carry the phosphothreonine modification. Serine 129 is subject to Phosphoserine. The residue at position 141 (threonine 141) is a Phosphothreonine. Basic residues predominate over residues 144-153 (AARRGRKRKA). The Nuclear localization signal motif lies at 146–156 (RRGRKRKAEKQ). A phosphoserine mark is found at serine 176 and serine 205. A compositionally biased stretch (basic and acidic residues) spans 212–260 (DEDKSKKKGPEEKPPKKQLKKEEEGQKEEEKPRKEPDKKEGKKEVESKR). Residue serine 270 is modified to Phosphoserine. A Phosphothreonine modification is found at threonine 271. Phosphoserine occurs at positions 272 and 274. The segment covering 285–300 (KRKGGRHFQAAHRRNM) has biased composition (basic residues). Basic and acidic residues predominate over residues 303 to 347 (GQHEKEAADRKRKQEEQMETEQQTKDEGKKPEVKKVEKKRETSMD). Coiled coils occupy residues 304–332 (QHEK…EGKK) and 369–393 (NRCI…KHTE). The interval 338-415 (VEKKRETSMD…VSQVIMEKST (78 aa)) is integrase-binding domain (IBD). Phosphoserine is present on serine 432. Phosphothreonine is present on threonine 435. Phosphoserine is present on serine 441. Residues 444 to 471 (EQRQHEEANKTKDQGKKGPNKKLEKEQT) show a composition bias toward basic and acidic residues. A disordered region spans residues 444–528 (EQRQHEEANK…VSLKESTLDN (85 aa)). Residues 472-492 (GTKSLNGGSDAQESNHPQHNG) are compositionally biased toward polar residues. A compositionally biased stretch (basic and acidic residues) spans 496–528 (EESKDSREAGSKTKTPGEEREAEVSLKESTLDN). At arginine 515 the chain carries Citrulline. Serine 520 is subject to Phosphoserine. A Phosphothreonine modification is found at threonine 525.

The protein belongs to the HDGF family. Monomer. Interacts with IFRD1/PC4. Interacts (via IBD domain) with POGZ (via IBM motif) and CDCA7L (via IBM motifs). Interacts (via IBD domain) with KMT2A (via IBM motifs) with a moderate affinity whereas interacts with the KMT2A-MEN1 complex with a greater affinity; MEN1 enhances interaction of KMT2A with PSIP1. Interacts (via IBD domain) with IWS1 (via IBM motif), MED1 (via IBM motif) and DBF4 (via IBM motifs). Citrullinated by PADI4.

It localises to the nucleus. Its function is as follows. Transcriptional coactivator involved in neuroepithelial stem cell differentiation and neurogenesis. Involved in particular in lens epithelial cell gene regulation and stress responses. May play an important role in lens epithelial to fiber cell terminal differentiation. May play a protective role during stress-induced apoptosis. The polypeptide is PC4 and SFRS1-interacting protein (Psip1) (Rattus norvegicus (Rat)).